The primary structure comprises 673 residues: MPFWWGRRNKFWYGRNYRRKKRRFPKRRKRRFYRRTKYRRPARRRRRRRRKVRRKKKTLIVRQWQPDSIVLCKIKGYDSIIWGAEGTQFQCSTHEMYEYTRQKYPGGGGFGVQLYSLEYLYDQWKLRNNIWTKTNQLKDLCRYLKCVMTFYRHQHIDFVIVYERQPPFEIDKLTYMKYHPYMLLQRKHKIILPSQTTNPRGKLKKKKTIKPPKQMLSKWFFQQQFAKYDLLLIAAAACSLRYPRIGCCNENRMITLYCLNTKFYQDTEWGTTKQAPHYFKPYATINKSMIFVSNYGGKKTEYNIGQWIETDIPGEGNLARYYRSISKEGGYFSPKILQAYQTKVKSVDYKPLPIVLGRYNPAIDDGKGNKIYLQTIMNGHWGLPQKTPDYIIEEVPLWLGFWGYYNYLKQTRTEAIFPLHMFVVQSKYIQTQQTETPNNFWAFIDNSFIQGKNPWDSVITYSEQKLWFPTVAWQLKTINAICESGPYVPKLDNQTYSTWELATHYSFHFKWGGPQISDQPVEDPGNKNKYDVPDTIKEALQIVNPAKNIAATMFHDWDYRRGCITSTAIKRMQQNLPTDSSLESDSDSEPAPKKKRLLPVLHDPQKKTEKINQCLLSLCEESTCQEQETEENILKLIQQQQQQQQKLKHNLLVLIKDLKVKQRLLQLQTGVLE.

The segment at 575–595 (NLPTDSSLESDSDSEPAPKKK) is disordered.

It belongs to the anelloviridae capsid protein family.

It is found in the virion. Self-assembles to form an icosahedral capsid with a T=1 symmetry, about 30 nm in diameter, and consisting of 60 capsid proteins. The capsid encapsulates the genomic DNA. Capsid protein is involved in attachment and entry into the host cell. This is Capsid protein from Homo sapiens (Human).